The chain runs to 239 residues: Ribonuclease PH (239 aa).

Residues R87 and 125–127 (GTR) each bind phosphate.

The protein belongs to the RNase PH family. As to quaternary structure, homohexameric ring arranged as a trimer of dimers.

It carries out the reaction tRNA(n+1) + phosphate = tRNA(n) + a ribonucleoside 5'-diphosphate. Its function is as follows. Phosphorolytic 3'-5' exoribonuclease that plays an important role in tRNA 3'-end maturation. Removes nucleotide residues following the 3'-CCA terminus of tRNAs; can also add nucleotides to the ends of RNA molecules by using nucleoside diphosphates as substrates, but this may not be physiologically important. Probably plays a role in initiation of 16S rRNA degradation (leading to ribosome degradation) during starvation. In Syntrophomonas wolfei subsp. wolfei (strain DSM 2245B / Goettingen), this protein is Ribonuclease PH.